A 356-amino-acid polypeptide reads, in one-letter code: Protein RecA (356 aa).

71 to 78 (GPESSGKT) serves as a coordination point for ATP.

Belongs to the RecA family.

Its subcellular location is the cytoplasm. In terms of biological role, can catalyze the hydrolysis of ATP in the presence of single-stranded DNA, the ATP-dependent uptake of single-stranded DNA by duplex DNA, and the ATP-dependent hybridization of homologous single-stranded DNAs. It interacts with LexA causing its activation and leading to its autocatalytic cleavage. In Synechococcus elongatus (strain ATCC 33912 / PCC 7942 / FACHB-805) (Anacystis nidulans R2), this protein is Protein RecA.